A 114-amino-acid polypeptide reads, in one-letter code: UPF0473 protein OEOE_1164 (114 aa).

This sequence belongs to the UPF0473 family.

In Oenococcus oeni (strain ATCC BAA-331 / PSU-1), this protein is UPF0473 protein OEOE_1164.